The primary structure comprises 297 residues: 33 kDa chaperonin (297 aa).

Disulfide bonds link Cys-232–Cys-234 and Cys-266–Cys-269.

It belongs to the HSP33 family. In terms of processing, under oxidizing conditions two disulfide bonds are formed involving the reactive cysteines. Under reducing conditions zinc is bound to the reactive cysteines and the protein is inactive.

It is found in the cytoplasm. Redox regulated molecular chaperone. Protects both thermally unfolding and oxidatively damaged proteins from irreversible aggregation. Plays an important role in the bacterial defense system toward oxidative stress. This Pseudomonas aeruginosa (strain LESB58) protein is 33 kDa chaperonin.